Consider the following 817-residue polypeptide: Protein Jade-3 (817 aa).

The tract at residues 1–38 is disordered; sequence MKRLRNLSSSDSSDNESPSTSFSSCFQHKGKGKCTADD. A compositionally biased stretch (low complexity) spans 8–24; the sequence is SSSDSSDNESPSTSFSS. Residues 202 to 252 form a PHD-type 1 zinc finger; that stretch reads DVICDVCRSPDSEEGNDMVFCDRCNICVHQACYGILKVPEGSWLCRTCVLG. The segment at 254-288 adopts a C2HC pre-PHD-type zinc-finger fold; it reads HPQCILCPKTGGAMKATRTGTKWAHVSCALWIPEV. The PHD-type 2 zinc-finger motif lies at 312–368; it reads LVCSLCKLKTGACIQCSVKSCITAFHVTCAFEHSLEMKTILDEGDEVKFKSYCLKHS. 3 disordered regions span residues 375-396, 665-689, and 719-817; these read ISEQ…SERT, NGVL…QNSE, and LVRT…SVQR. Residues 379 to 396 are compositionally biased toward basic and acidic residues; the sequence is EEPHKTHSDNRPTESERT. Positions 667-689 are enriched in polar residues; that stretch reads VLSSGDRTQRDSSSQTSPGQNSE. The segment covering 722 to 743 has biased composition (basic and acidic residues); sequence TTEDLRSSEKPQRRQSVKERLW. Residues 747-758 are compositionally biased toward polar residues; that stretch reads PADTQTSGTPYQ. Over residues 777 to 799 the composition is skewed to basic and acidic residues; the sequence is DENKDHMLLRRNSRESPNRDSCR. Positions 801-810 are enriched in basic residues; the sequence is SRIRGKRKMT.

The protein belongs to the JADE family. In terms of assembly, component of the HBO1 complex.

Scaffold subunit of some HBO1 complexes, which have a histone H4 acetyltransferase activity. The protein is Protein Jade-3 (jade3) of Xenopus tropicalis (Western clawed frog).